A 239-amino-acid chain; its full sequence is UDP-2,3-diacylglucosamine hydrolase (239 aa).

Positions 8, 10, 41, 79, and 114 each coordinate Mn(2+). Residue 79–80 participates in substrate binding; it reads NR. 5 residues coordinate substrate: Asp-122, Ser-160, Asn-164, Lys-167, and His-195. 2 residues coordinate Mn(2+): His-195 and His-197.

The protein belongs to the LpxH family. The cofactor is Mn(2+).

Its subcellular location is the cell inner membrane. The catalysed reaction is UDP-2-N,3-O-bis[(3R)-3-hydroxytetradecanoyl]-alpha-D-glucosamine + H2O = 2-N,3-O-bis[(3R)-3-hydroxytetradecanoyl]-alpha-D-glucosaminyl 1-phosphate + UMP + 2 H(+). Its pathway is glycolipid biosynthesis; lipid IV(A) biosynthesis; lipid IV(A) from (3R)-3-hydroxytetradecanoyl-[acyl-carrier-protein] and UDP-N-acetyl-alpha-D-glucosamine: step 4/6. In terms of biological role, hydrolyzes the pyrophosphate bond of UDP-2,3-diacylglucosamine to yield 2,3-diacylglucosamine 1-phosphate (lipid X) and UMP by catalyzing the attack of water at the alpha-P atom. Involved in the biosynthesis of lipid A, a phosphorylated glycolipid that anchors the lipopolysaccharide to the outer membrane of the cell. In Sodalis glossinidius (strain morsitans), this protein is UDP-2,3-diacylglucosamine hydrolase.